We begin with the raw amino-acid sequence, 491 residues long: Protein phosphatase ppm-1.G (491 aa).

Residues S23–F486 form the PPM-type phosphatase domain. Residues D57 and G58 each coordinate Mn(2+). Basic and acidic residues predominate over residues K112–G125. Disordered regions lie at residues K112 to I136 and G170 to V294. 2 stretches are compositionally biased toward acidic residues: residues S173–T192 and A260–V294. Residues D428 and D477 each contribute to the Mn(2+) site.

The protein belongs to the PP2C family. Requires Mg(2+) as cofactor. Mn(2+) is required as a cofactor.

It carries out the reaction O-phospho-L-seryl-[protein] + H2O = L-seryl-[protein] + phosphate. The catalysed reaction is O-phospho-L-threonyl-[protein] + H2O = L-threonyl-[protein] + phosphate. The protein is Protein phosphatase ppm-1.G of Caenorhabditis elegans.